A 1343-amino-acid polypeptide reads, in one-letter code: DNA-directed RNA polymerase subunit beta (1343 aa).

It belongs to the RNA polymerase beta chain family. The RNAP catalytic core consists of 2 alpha, 1 beta, 1 beta' and 1 omega subunit. When a sigma factor is associated with the core the holoenzyme is formed, which can initiate transcription.

The enzyme catalyses RNA(n) + a ribonucleoside 5'-triphosphate = RNA(n+1) + diphosphate. Functionally, DNA-dependent RNA polymerase catalyzes the transcription of DNA into RNA using the four ribonucleoside triphosphates as substrates. This chain is DNA-directed RNA polymerase subunit beta, found in Shewanella pealeana (strain ATCC 700345 / ANG-SQ1).